An 86-amino-acid chain; its full sequence is uncharacterized protein (86 aa).

To C.jejuni CJ0253.

This is an uncharacterized protein from Helicobacter pylori (strain ATCC 700392 / 26695) (Campylobacter pylori).